The chain runs to 61 residues: Transcription elongation factor Spt4 (61 aa).

Zn(2+)-binding residues include Cys-6, Cys-9, Cys-18, and Cys-21.

It belongs to the archaeal Spt4 family. Heterodimer composed of Spt4 and Spt5.

Stimulates transcription elongation. The sequence is that of Transcription elongation factor Spt4 from Pyrococcus furiosus (strain ATCC 43587 / DSM 3638 / JCM 8422 / Vc1).